The primary structure comprises 1544 residues: Zinc finger protein GLI2 (1544 aa).

A disordered region spans residues 1-26 (METSAPAPALEKKEAKSGLLEDSSFP). Phosphoserine occurs at positions 145, 230, 232, and 238. Residues 338 to 364 (SSSSSNCLNDANQNKQNSESAVSSTVN) form a disordered region. S385 bears the Phosphoserine; by DYRK2 mark. The C2H2-type 1 zinc finger occupies 417–444 (TNCHWADCTKEYDTQEQLVHHINNEHIH). Residues 455–477 (QACTREQKPFKAQYMLVVHMRRH) form a C2H2-type 2; degenerate zinc finger. 3 consecutive C2H2-type zinc fingers follow at residues 483 to 507 (HKCT…LRSH), 513 to 538 (YVCE…NRTH), and 544 to 569 (YICK…KTVH). Disordered regions lie at residues 557–619 (DPSS…TSHT) and 635–682 (GLCQ…ALAD). A compositionally biased stretch (basic and acidic residues) spans 569-585 (HGPDAHVTKKQRNDVHV). The span at 637-657 (CQSSPGAQSSCSSEPSPLGSA) shows a compositional bias: low complexity. Position 707 is a phosphoserine (S707). Residue T708 is modified to Phosphothreonine. K740 carries the N6-acetyllysine; by EP300 modification. Disordered stretches follow at residues 781–800 (SQLQ…AYTV), 805–861 (SGIS…PGLL), 908–963 (ALPG…RRPD), 995–1016 (VQSH…RPPS), 1166–1220 (FGQY…CLGM), and 1422–1457 (GGCP…VSST). Polar residues-rich tracts occupy residues 790–800 (STSTMSSAYTV) and 805–814 (SGISPYFSSR). A compositionally biased stretch (basic and acidic residues) spans 954-963 (RASDPVRRPD). S997 is modified (phosphoserine; by DYRK2). Polar residues-rich tracts occupy residues 997-1009 (SHPS…TRNA), 1173-1190 (NPQS…TQPH), and 1200-1209 (SRGSYTQQPR).

It belongs to the GLI C2H2-type zinc-finger protein family. In terms of assembly, interacts with ZIC1 and ZIC2. Interacts with STK36. Interacts with SUFU; this inhibits transcriptional activation mediated by GLI2. Interacts (via C-terminal internal region) with FOXC1 (via N-terminus); this interaction is direct and increases GLI2 DNA-binding and transcriptional activity through a smoothened (SMO)-independent Hedgehog (Hh) signaling pathway. In terms of processing, phosphorylated in vitro by ULK3. Phosphorylated by DYRK2; this inhibits GLI2 transcription factor activity and promotes proteasomal degradation of GLI2. Acetylation at Lys-740 inhibits Hh target gene expression, probably by impeding entry into chromatin thus preventing promoter occupancy.

It is found in the nucleus. The protein localises to the cytoplasm. The protein resides in the cell projection. It localises to the cilium. Functionally, functions as a transcription regulator in the hedgehog (Hh) pathway. Functions as a transcriptional activator. May also function as transcriptional repressor. Requires STK36 for full transcriptional activator activity. Binds to the DNA sequence 5'-GAACCACCCA-3' which is part of the TRE-2S regulatory element. Is involved in the smoothened (SHH) signaling pathway. Required for normal skeleton development. This Mus musculus (Mouse) protein is Zinc finger protein GLI2.